A 347-amino-acid polypeptide reads, in one-letter code: GMP reductase (347 aa).

108–131 is an NADP(+) binding site; that stretch reads ADFEKTKQILDLNPALNFVCIDVA. Gly181 and Gly183 together coordinate K(+). The Thioimidate intermediate role is filled by Cys186. Position 216–239 (216–239) interacts with NADP(+); sequence IVSDGGCTTPGDVAKAFGGGADFV.

This sequence belongs to the IMPDH/GMPR family. GuaC type 1 subfamily. Homotetramer.

It carries out the reaction IMP + NH4(+) + NADP(+) = GMP + NADPH + 2 H(+). In terms of biological role, catalyzes the irreversible NADPH-dependent deamination of GMP to IMP. It functions in the conversion of nucleobase, nucleoside and nucleotide derivatives of G to A nucleotides, and in maintaining the intracellular balance of A and G nucleotides. The chain is GMP reductase from Shigella dysenteriae serotype 1 (strain Sd197).